The primary structure comprises 571 residues: Isocitrate dehydrogenase kinase/phosphatase (571 aa).

ATP contacts are provided by residues 318–324 (APGVRGM) and Lys-339. The active site involves Asp-374.

It belongs to the AceK family.

It localises to the cytoplasm. The catalysed reaction is L-seryl-[isocitrate dehydrogenase] + ATP = O-phospho-L-seryl-[isocitrate dehydrogenase] + ADP + H(+). Functionally, bifunctional enzyme which can phosphorylate or dephosphorylate isocitrate dehydrogenase (IDH) on a specific serine residue. This is a regulatory mechanism which enables bacteria to bypass the Krebs cycle via the glyoxylate shunt in response to the source of carbon. When bacteria are grown on glucose, IDH is fully active and unphosphorylated, but when grown on acetate or ethanol, the activity of IDH declines drastically concomitant with its phosphorylation. In Pseudomonas putida (strain ATCC 700007 / DSM 6899 / JCM 31910 / BCRC 17059 / LMG 24140 / F1), this protein is Isocitrate dehydrogenase kinase/phosphatase.